A 100-amino-acid polypeptide reads, in one-letter code: Cytochrome c2 iso-1 (100 aa).

Heme c-binding residues include C11, C14, H15, and M76.

This sequence belongs to the cytochrome c family. Post-translationally, binds 1 heme c group covalently per subunit.

Functionally, cytochrome c2 is found mainly in purple, non-sulfur, photosynthetic bacteria where it functions as the electron donor to the oxidized bacteriochlorophyll in the photophosphorylation pathway. However, it may also have a role in the respiratory chain and is found in some non-photosynthetic bacteria. The chain is Cytochrome c2 iso-1 from Magnetospirillum molischianum (Rhodospirillum molischianum).